Reading from the N-terminus, the 182-residue chain is uncharacterized protein (182 aa).

This is an uncharacterized protein from Mycobacterium tuberculosis (strain CDC 1551 / Oshkosh).